The sequence spans 855 residues: DNA mismatch repair protein MutS (855 aa).

616-623 (GPNMGGKS) provides a ligand contact to ATP.

It belongs to the DNA mismatch repair MutS family.

This protein is involved in the repair of mismatches in DNA. It is possible that it carries out the mismatch recognition step. This protein has a weak ATPase activity. This is DNA mismatch repair protein MutS from Salmonella paratyphi A (strain ATCC 9150 / SARB42).